A 507-amino-acid chain; its full sequence is BPI fold-containing family C protein (507 aa).

An N-terminal signal peptide occupies residues 1–23; sequence MCTKTIPVLWGCFLLWNLYVSSS. Residues Asn79, Asn92, and Asn113 are each glycosylated (N-linked (GlcNAc...) asparagine). Residues Cys161 and Cys200 are joined by a disulfide bond. 7 N-linked (GlcNAc...) asparagine glycosylation sites follow: Asn213, Asn225, Asn257, Asn301, Asn355, Asn372, and Asn415.

Belongs to the BPI/LBP/Plunc superfamily. BPI/LBP family. Detected in the basal layer of the epidermis from inflammatory skin from psoriasis patients, but not in normal skin.

The protein resides in the secreted. The protein is BPI fold-containing family C protein (BPIFC) of Homo sapiens (Human).